The primary structure comprises 213 residues: Adenylate kinase (213 aa).

10–15 contributes to the ATP binding site; it reads GSGKGT. An NMP region spans residues 30–59; the sequence is SVGDLLRNIISSSSELGKKIKGTVESGNLI. Residues R36, 57-59, 83-86, and Q90 contribute to the AMP site; these read NLI and GFPR. The LID stretch occupies residues 125 to 160; sequence NRLACLDCKSIYSVSSFKSTTCAKCKSTRLEKRIDD. R126 lines the ATP pocket. Residues C129 and C132 each coordinate Zn(2+). 135-136 lines the ATP pocket; the sequence is IY. Zn(2+) contacts are provided by C146 and C149. AMP contacts are provided by R157 and R169. L195 lines the ATP pocket.

Belongs to the adenylate kinase family. In terms of assembly, monomer.

It is found in the cytoplasm. The enzyme catalyses AMP + ATP = 2 ADP. It participates in purine metabolism; AMP biosynthesis via salvage pathway; AMP from ADP: step 1/1. Functionally, catalyzes the reversible transfer of the terminal phosphate group between ATP and AMP. Plays an important role in cellular energy homeostasis and in adenine nucleotide metabolism. This Wolbachia sp. subsp. Drosophila simulans (strain wRi) protein is Adenylate kinase.